The primary structure comprises 178 residues: Large ribosomal subunit protein bL25 (178 aa).

This sequence belongs to the bacterial ribosomal protein bL25 family. CTC subfamily. Part of the 50S ribosomal subunit; part of the 5S rRNA/L5/L18/L25 subcomplex. Contacts the 5S rRNA. Binds to the 5S rRNA independently of L5 and L18.

Functionally, this is one of the proteins that binds to the 5S RNA in the ribosome where it forms part of the central protuberance. This Sulfurimonas denitrificans (strain ATCC 33889 / DSM 1251) (Thiomicrospira denitrificans (strain ATCC 33889 / DSM 1251)) protein is Large ribosomal subunit protein bL25.